Consider the following 303-residue polypeptide: Protoheme IX farnesyltransferase (303 aa).

Transmembrane regions (helical) follow at residues 25 to 45, 54 to 74, 118 to 138, 166 to 186, 230 to 250, and 280 to 300; these read MGLVQGNLIPAFAGAWLAIVM, IPQILLMLVGSTLIMGGACAL, CLFLLNIPSGVLGLIGIVGYV, IGWVAIDGSLSLAAVALFLVV, LVLLLPLPFLLSNLGVTFVVI, and FVYSLNYLVVFFALVVVVSLI.

This sequence belongs to the UbiA prenyltransferase family. Protoheme IX farnesyltransferase subfamily. Interacts with CtaA.

The protein resides in the cell membrane. It catalyses the reaction heme b + (2E,6E)-farnesyl diphosphate + H2O = Fe(II)-heme o + diphosphate. The protein operates within porphyrin-containing compound metabolism; heme O biosynthesis; heme O from protoheme: step 1/1. Its function is as follows. Converts heme B (protoheme IX) to heme O by substitution of the vinyl group on carbon 2 of heme B porphyrin ring with a hydroxyethyl farnesyl side group. The chain is Protoheme IX farnesyltransferase from Staphylococcus epidermidis (strain ATCC 35984 / DSM 28319 / BCRC 17069 / CCUG 31568 / BM 3577 / RP62A).